The following is a 933-amino-acid chain: Clumping factor A (933 aa).

The N-terminal stretch at 1-39 (MNMKKKEKHAIRKKSIGVASVLVGTLIGFGLLSSKEADA) is a signal peptide. The YSIRK-G/S signaling motif motif lies at 9-20 (HAIRKKSIGVAS). Disordered stretches follow at residues 34–200 (SKEA…SNKD) and 529–904 (FNNG…SEDE). A ligand binding A region region spans residues 40–542 (SENSVTQSDS…SGSGDGIDKP (503 aa)). Positions 47 to 65 (SDSASNESKSNDSSSVSAA) are enriched in low complexity. Polar residues predominate over residues 71–105 (TNVSDTKTSSNTNNGETSVAQNPAQQETTQSSSTN). The segment covering 106–132 (ATTEETPVTGEATTTTTNQANTPATTQ) has biased composition (low complexity). Residues 133–200 (SSNTNAEELV…PQSTDASNKD (68 aa)) are compositionally biased toward polar residues. A compositionally biased stretch (acidic residues) spans 547 to 565 (QPDEPGEIEPIPEDSDSDP). Over residues 566-598 (GSDSGSDSNSDSGSDSGSDSTSDSGSDSASDSD) the composition is skewed to low complexity. Acidic residues predominate over residues 599 to 861 (SASDSDSASD…DSDSESDSNS (263 aa)). Positions 862 to 880 (DSESGSNNNVVPPNSPKNG) are enriched in low complexity. Positions 887–896 (NEAKDSKEPL) are enriched in basic and acidic residues. An LPXTG sorting signal motif is present at residues 896–900 (LPDTG). At threonine 899 the chain carries Pentaglycyl murein peptidoglycan amidated threonine. Residues 900–933 (GSEDEANTSLIWGLLASIGSLLLFRRKKENKDKK) constitute a propeptide, removed by sortase.

The protein belongs to the serine-aspartate repeat-containing protein (SDr) family.

Its subcellular location is the secreted. The protein localises to the cell wall. Functionally, cell surface-associated protein implicated in virulence. Promotes bacterial attachment exclusively to the gamma-chain of human fibrinogen. Induces formation of bacterial clumps, which diminish the ability of group IIA phospholipase A2 to cause bacterial phospholipid hydrolysis and killing. Significantly decreases macrophage phagocytosis possibly thanks to the clumps, clumped bacteria being too large to be phagocytosed. Dominant factor responsible for human platelet aggregation, which may be an important mechanism for initiating infective endocarditis. Enhances spleen cell proliferative response in vitro, contributing significantly to the immunostimulatory activity of S.aureus. The protein is Clumping factor A (clfA) of Staphylococcus aureus (strain Newman).